The sequence spans 214 residues: Methylthioribulose-1-phosphate dehydratase (214 aa).

Zn(2+) is bound by residues H103 and H105.

Belongs to the aldolase class II family. MtnB subfamily. The cofactor is Zn(2+).

The catalysed reaction is 5-(methylsulfanyl)-D-ribulose 1-phosphate = 5-methylsulfanyl-2,3-dioxopentyl phosphate + H2O. It functions in the pathway amino-acid biosynthesis; L-methionine biosynthesis via salvage pathway; L-methionine from S-methyl-5-thio-alpha-D-ribose 1-phosphate: step 2/6. In terms of biological role, catalyzes the dehydration of methylthioribulose-1-phosphate (MTRu-1-P) into 2,3-diketo-5-methylthiopentyl-1-phosphate (DK-MTP-1-P). In Granulibacter bethesdensis (strain ATCC BAA-1260 / CGDNIH1), this protein is Methylthioribulose-1-phosphate dehydratase.